Consider the following 181-residue polypeptide: Large ribosomal subunit protein uL5 (181 aa).

It belongs to the universal ribosomal protein uL5 family. In terms of assembly, part of the 50S ribosomal subunit; contacts the 5S rRNA and probably tRNA. Forms a bridge to the 30S subunit in the 70S ribosome.

Its function is as follows. This is one of the proteins that bind and probably mediate the attachment of the 5S RNA into the large ribosomal subunit, where it forms part of the central protuberance. In the 70S ribosome it contacts protein S13 of the 30S subunit (bridge B1b), connecting the 2 subunits; this bridge is implicated in subunit movement. May contact the P site tRNA; the 5S rRNA and some of its associated proteins might help stabilize positioning of ribosome-bound tRNAs. This Methanococcus vannielii protein is Large ribosomal subunit protein uL5.